Here is a 423-residue protein sequence, read N- to C-terminus: COP9 signalosome complex subunit 3 (423 aa).

A PCI domain is found at 197–365; sequence NFERALYFFE…GMVCFHDNPE (169 aa). Positions 402–423 are disordered; sequence QFVQKSMGTQEDDVGSKTSSYS.

It belongs to the CSN3 family. Component of the CSN complex, probably composed of cops1, cops2, cops3, cops4, cops5, cops6, cops7, cops8 and cops9.

It is found in the cytoplasm. The protein localises to the nucleus. Functionally, component of the COP9 signalosome complex (CSN), a complex involved in various cellular and developmental processes. The CSN complex is an essential regulator of the ubiquitin (Ubl) conjugation pathway by mediating the deneddylation of the cullin subunits of E3 ligase complexes, leading to modify the Ubl ligase activity. This Danio rerio (Zebrafish) protein is COP9 signalosome complex subunit 3 (cops3).